The sequence spans 187 residues: Ribosome-recycling factor (187 aa).

Belongs to the RRF family.

The protein localises to the cytoplasm. Functionally, responsible for the release of ribosomes from messenger RNA at the termination of protein biosynthesis. May increase the efficiency of translation by recycling ribosomes from one round of translation to another. In Nitrosococcus oceani (strain ATCC 19707 / BCRC 17464 / JCM 30415 / NCIMB 11848 / C-107), this protein is Ribosome-recycling factor.